The chain runs to 517 residues: Shugoshin 1 (517 aa).

The stretch at 1 to 89 forms a coiled coil; it reads MAKERCQKRS…DVILQLRKEC (89 aa). Positions 1-176 are necessary for interaction with PPP2CA and PPP2R1A; that stretch reads MAKERCQKRS…DFDSGKVEST (176 aa). Disordered stretches follow at residues 107–136, 149–173, 267–317, and 334–427; these read QSEE…LSGK, PYQT…SGKV, PEQI…TLDG, and HPTP…QESP. The stretch at 268-291 forms a coiled coil; the sequence is EQIESKHKRARKRRAEQRRTKQRC. Residues 273–302 are compositionally biased toward basic residues; it reads KHKRARKRRAEQRRTKQRCKSKSSLRSKGN. The segment covering 341–363 has biased composition (polar residues); it reads KMNNGCNKETDSSNSEVSDLECS. Positions 379–390 are enriched in basic and acidic residues; sequence RLRDYRESERAV. The residue at position 426 (Ser-426) is a Phosphoserine. Positions 441-445 match the PXVXL/I motif motif; it reads PRVKI. Positions 447–455 match the D-box motif; it reads KPSLPPKRR. A Phosphoserine; by NEK2 modification is found at Ser-497.

It belongs to the shugoshin family. Interacts with PPP2CA (or PPP2CB), PPP2R1B, PPP2R5A, PPP2R5B, PPP2R5C, PPP2R5D, PPP2R5E, SET, LRRC59, RBM10 (or RBM5), RPL10A, RPL28, RPL7, RPL7A and RPLP1. Interaction with protein phosphatase 2A occurs most probably through direct binding to the regulatory B56 subunits: PPP2R1B, PPP2R5A, PPP2R5B, PPP2R5C, PPP2R5D, PPP2R5E. Interacts with PPP2R1A and NEK2. Interacts with CDCA8. Post-translationally, ubiquitinated and degraded during mitotic exit by APC/C-Cdh1. Phosphorylation by NEK2 is essential for chromosome congression in mitosis and for the proper attachment of spindle microtubule to the kinetochore. Phosphorylated by PLK1 and AUKRB. As to expression, ubiquitously expressed in proliferating cells. Moderately expressed in the oocytes.

The protein localises to the nucleus. It is found in the chromosome. Its subcellular location is the centromere. The protein resides in the kinetochore. It localises to the cytoplasm. The protein localises to the cytoskeleton. It is found in the spindle pole. Its subcellular location is the microtubule organizing center. The protein resides in the centrosome. It localises to the nucleus speckle. In terms of biological role, plays a central role in chromosome cohesion during mitosis by preventing premature dissociation of cohesin complex from centromeres after prophase, when most of cohesin complex dissociates from chromosomes arms. May act by preventing phosphorylation of the STAG2 subunit of cohesin complex at the centromere, ensuring cohesin persistence at centromere until cohesin cleavage by ESPL1/separase at anaphase. Essential for proper chromosome segregation during mitosis and this function requires interaction with PPP2R1A. Its phosphorylated form is necessary for chromosome congression and for the proper attachment of spindle microtubule to the kinetochore. Necessary for kinetochore localization of PLK1 and CENPF. May play a role in the tension sensing mechanism of the spindle-assembly checkpoint by regulating PLK1 kinetochore affinity. Involved in centromeric enrichment of AUKRB in prometaphase. The polypeptide is Shugoshin 1 (Mus musculus (Mouse)).